We begin with the raw amino-acid sequence, 350 residues long: UBX domain-containing protein 2B (350 aa).

Residues 1 to 29 (MEERENSEEGDDGAGEEEEEDQGSGEDGG) show a composition bias toward acidic residues. The disordered stretch occupies residues 1–46 (MEERENSEEGDDGAGEEEEEDQGSGEDGGEVGAEREQEAELKDSLR). Over residues 32 to 45 (GAEREQEAELKDSL) the composition is skewed to basic and acidic residues. An SEP domain is found at 160–225 (EIQILLKLWS…MEDHQDQEYI (66 aa)). The UBX domain maps to 271 to 348 (EHVPTTKIQI…DILNTVILQR (78 aa)).

This sequence belongs to the NSFL1C family.

The protein resides in the nucleus. Its subcellular location is the cytoplasm. It is found in the cytosol. It localises to the endoplasmic reticulum. The protein localises to the golgi apparatus. The protein resides in the cytoskeleton. Its subcellular location is the microtubule organizing center. It is found in the centrosome. Its function is as follows. Adapter protein required for Golgi and endoplasmic reticulum biogenesis. Involved in Golgi and endoplasmic reticulum maintenance during interphase and in their reassembly at the end of mitosis. Regulates the centrosomal levels of kinase aurka-a/Aurora A during mitotic progression by promoting aurka-a removal from centrosomes in prophase. Also, regulates spindle orientation during mitosis. This is UBX domain-containing protein 2B (ubxn2b) from Xenopus laevis (African clawed frog).